We begin with the raw amino-acid sequence, 94 residues long: NADH-ubiquinone oxidoreductase 10.5 kDa subunit (94 aa).

It belongs to the complex I NDUFA2 subunit family. Complex I is composed of about 40 different subunits.

The protein resides in the mitochondrion inner membrane. Its function is as follows. Accessory subunit of the mitochondrial membrane respiratory chain NADH dehydrogenase (Complex I), that is believed not to be involved in catalysis. Complex I functions in the transfer of electrons from NADH to the respiratory chain. The immediate electron acceptor for the enzyme is believed to be ubiquinone. The sequence is that of NADH-ubiquinone oxidoreductase 10.5 kDa subunit (nuo-10.5) from Neurospora crassa (strain ATCC 24698 / 74-OR23-1A / CBS 708.71 / DSM 1257 / FGSC 987).